A 335-amino-acid polypeptide reads, in one-letter code: 2-acylglycerol O-acyltransferase 2-B (335 aa).

2 consecutive transmembrane segments (helical) span residues 24–44 (WAVS…LLLF) and 104–124 (YIMG…NFCT). An N-linked (GlcNAc...) asparagine glycan is attached at asparagine 206.

This sequence belongs to the diacylglycerol acyltransferase family.

Its subcellular location is the endoplasmic reticulum membrane. It localises to the cytoplasm. The protein resides in the perinuclear region. The enzyme catalyses a 2-acylglycerol + an acyl-CoA = a 1,2-diacylglycerol + CoA. The catalysed reaction is a 2-acylglycerol + an acyl-CoA = a 1,2-diacyl-sn-glycerol + CoA. It carries out the reaction a 2-acylglycerol + an acyl-CoA = a 2,3-diacyl-sn-glycerol + CoA. It catalyses the reaction a 1-acylglycerol + an acyl-CoA = a 1,2-diacylglycerol + CoA. The enzyme catalyses a 1-acylglycerol + an acyl-CoA = a 1,3-diacylglycerol + CoA. The catalysed reaction is 1-O-alkylglycerol + an acyl-CoA = 1-O-alkyl-3-acylglycerol + CoA. It carries out the reaction an acyl-CoA + a 1,2-diacyl-sn-glycerol = a triacyl-sn-glycerol + CoA. It participates in glycerolipid metabolism; triacylglycerol biosynthesis. Functionally, catalyzes the formation of diacylglycerol from 2-monoacylglycerol and fatty acyl-CoA. Involved in glycerolipid synthesis and lipid metabolism. Catalyzes the formation of diacylglycerol, the precursor of triacylglycerol, by transferring the acyl chain of a fatty acyl-CoA to a monoacylglycerol. Plays a central role in absorption of dietary fat in the small intestine by catalyzing the resynthesis of triacylglycerol in enterocytes. Has a preference toward monoacylglycerols containing unsaturated fatty acids in an order of C18:3 &gt; C18:2 &gt; C18:1 &gt; C18:0 at sn-2. Able to use 1-monoalkylglycerol (1-MAkG, 1-O-alkylglycerol) as an acyl acceptor for the synthesis of monoalkyl-monoacylglycerol (MAMAG, 1-O-alkyl-3-acylglycerol or 1-O-alkyl-2-acylglycerol) and subsequently, with lower efficiency, may add another acyl chain producing monoalkyl-diacylglycerol (MADAG, 1-O-alkyl-2,3-diacylglycerol). Possesses weak but significant activity with diacylglycerol as substrate, producing triacylglycerol (triacyl-sn-glycerol). This is 2-acylglycerol O-acyltransferase 2-B (mogat2-b) from Xenopus laevis (African clawed frog).